A 126-amino-acid chain; its full sequence is Fluoride-specific ion channel FluC (126 aa).

4 helical membrane-spanning segments follow: residues 6-26 (FVAV…FSVL), 36-56 (YGTL…VGFF), 69-89 (LAIT…SEVV), and 99-119 (WAAM…ALGL). Na(+) is bound by residues Gly76 and Thr79.

This sequence belongs to the fluoride channel Fluc/FEX (TC 1.A.43) family.

It localises to the cell inner membrane. The catalysed reaction is fluoride(in) = fluoride(out). With respect to regulation, na(+) is not transported, but it plays an essential structural role and its presence is essential for fluoride channel function. Fluoride-specific ion channel. Important for reducing fluoride concentration in the cell, thus reducing its toxicity. This chain is Fluoride-specific ion channel FluC, found in Cupriavidus taiwanensis (strain DSM 17343 / BCRC 17206 / CCUG 44338 / CIP 107171 / LMG 19424 / R1) (Ralstonia taiwanensis (strain LMG 19424)).